The chain runs to 434 residues: Nicotinate phosphoribosyltransferase (434 aa).

Residue H242 is modified to Phosphohistidine; by autocatalysis.

This sequence belongs to the NAPRTase family. In terms of processing, transiently phosphorylated on a His residue during the reaction cycle. Phosphorylation strongly increases the affinity for substrates and increases the rate of nicotinate D-ribonucleotide production. Dephosphorylation regenerates the low-affinity form of the enzyme, leading to product release.

The catalysed reaction is nicotinate + 5-phospho-alpha-D-ribose 1-diphosphate + ATP + H2O = nicotinate beta-D-ribonucleotide + ADP + phosphate + diphosphate. The protein operates within cofactor biosynthesis; NAD(+) biosynthesis; nicotinate D-ribonucleotide from nicotinate: step 1/1. In terms of biological role, catalyzes the synthesis of beta-nicotinate D-ribonucleotide from nicotinate and 5-phospho-D-ribose 1-phosphate at the expense of ATP. The sequence is that of Nicotinate phosphoribosyltransferase from Brucella melitensis biotype 1 (strain ATCC 23456 / CCUG 17765 / NCTC 10094 / 16M).